Here is a 398-residue protein sequence, read N- to C-terminus: Phosphoglycerate kinase (398 aa).

Residues 21-23 (DFN), R36, 59-62 (HLGR), R119, and R157 each bind substrate. ATP-binding positions include K208, G296, E327, and 354–357 (GGDS).

This sequence belongs to the phosphoglycerate kinase family. In terms of assembly, monomer.

It is found in the cytoplasm. The enzyme catalyses (2R)-3-phosphoglycerate + ATP = (2R)-3-phospho-glyceroyl phosphate + ADP. Its pathway is carbohydrate degradation; glycolysis; pyruvate from D-glyceraldehyde 3-phosphate: step 2/5. This is Phosphoglycerate kinase from Streptococcus pneumoniae (strain Taiwan19F-14).